The chain runs to 307 residues: Small ribosomal subunit biogenesis GTPase RsgA (307 aa).

Positions 64-229 (KNSLIRPSIA…IADTPGFSSL (166 aa)) constitute a CP-type G domain. GTP contacts are provided by residues 113 to 116 (SKLD) and 172 to 180 (GQTGAGKTT). The Zn(2+) site is built by C253, C258, H260, and C266.

The protein belongs to the TRAFAC class YlqF/YawG GTPase family. RsgA subfamily. In terms of assembly, monomer. Associates with 30S ribosomal subunit, binds 16S rRNA. The cofactor is Zn(2+).

It is found in the cytoplasm. One of several proteins that assist in the late maturation steps of the functional core of the 30S ribosomal subunit. Helps release RbfA from mature subunits. May play a role in the assembly of ribosomal proteins into the subunit. Circularly permuted GTPase that catalyzes slow GTP hydrolysis, GTPase activity is stimulated by the 30S ribosomal subunit. This is Small ribosomal subunit biogenesis GTPase RsgA from Lactococcus lactis subsp. lactis (strain IL1403) (Streptococcus lactis).